The primary structure comprises 251 residues: Membrane-anchored junction protein (251 aa).

Residues 1–227 lie on the Nuclear side of the membrane; sequence MSLKPFTYPF…HSNPPPLKEP (227 aa). Residues 140–225 form a disordered region; that stretch reads RKRKLMEEPS…LEHSNPPPLK (86 aa). The segment covering 183–198 has biased composition (polar residues); that stretch reads EDSQQDTPASDSTAVT. A helical transmembrane segment spans residues 228-246; the sequence is AARGFLGFLSALFPFRYFF. Topologically, residues 247–251 are perinuclear space; that stretch reads RKSTQ.

This sequence belongs to the MAJIN family. As to quaternary structure, component of the MAJIN-TERB1-TERB2 complex, composed of MAJIN, TERB1 and TERB2.

The protein localises to the nucleus inner membrane. It is found in the chromosome. Its subcellular location is the telomere. Meiosis-specific telomere-associated protein involved in meiotic telomere attachment to the nucleus inner membrane, a crucial step for homologous pairing and synapsis. Component of the MAJIN-TERB1-TERB2 complex, which promotes telomere cap exchange by mediating attachment of telomeric DNA to the inner nuclear membrane and replacement of the protective cap of telomeric chromosomes: in early meiosis, the MAJIN-TERB1-TERB2 complex associates with telomeric DNA and the shelterin/telosome complex. During prophase, the complex matures and promotes release of the shelterin/telosome complex from telomeric DNA. In the complex, MAJIN acts as the anchoring subunit to the nucleus inner membrane. MAJIN shows DNA-binding activity, possibly for the stabilization of telomere attachment on the nucleus inner membrane. The protein is Membrane-anchored junction protein of Rattus norvegicus (Rat).